The sequence spans 236 residues: Transcriptional activator protein SolR (236 aa).

The HTH luxR-type domain maps to 169 to 234; the sequence is VPESNAVLTT…QAVVKAIATG (66 aa). Residues 193–212 constitute a DNA-binding region (H-T-H motif); that stretch reads AYEIGQILRISERTVNFHVN.

It belongs to the autoinducer-regulated transcriptional regulatory protein family.

The sequence is that of Transcriptional activator protein SolR (solR) from Ralstonia solanacearum (Pseudomonas solanacearum).